The chain runs to 104 residues: Large ribosomal subunit protein eL31 (104 aa).

This sequence belongs to the eukaryotic ribosomal protein eL31 family.

This Aeropyrum pernix (strain ATCC 700893 / DSM 11879 / JCM 9820 / NBRC 100138 / K1) protein is Large ribosomal subunit protein eL31 (rpl31e).